We begin with the raw amino-acid sequence, 407 residues long: Peptidase T (407 aa).

H82 serves as a coordination point for Zn(2+). Residue D84 is part of the active site. D143 provides a ligand contact to Zn(2+). E177 (proton acceptor) is an active-site residue. 3 residues coordinate Zn(2+): E178, D200, and H382.

Belongs to the peptidase M20B family. It depends on Zn(2+) as a cofactor.

The protein localises to the cytoplasm. The enzyme catalyses Release of the N-terminal residue from a tripeptide.. Cleaves the N-terminal amino acid of tripeptides. The protein is Peptidase T of Streptococcus pyogenes serotype M18 (strain MGAS8232).